A 349-amino-acid chain; its full sequence is Isopentenyl-diphosphate delta-isomerase (349 aa).

R6 to K7 provides a ligand contact to substrate. FMN is bound by residues A62–T64, S93, and N122. Residue Q152 participates in substrate binding. Residue E153 participates in Mg(2+) binding. Residues K184, T214, G258–G259, and A280–G281 each bind FMN.

The protein belongs to the IPP isomerase type 2 family. In terms of assembly, homooctamer. Dimer of tetramers. The cofactor is FMN. NADPH is required as a cofactor. It depends on Mg(2+) as a cofactor.

It localises to the cytoplasm. It carries out the reaction isopentenyl diphosphate = dimethylallyl diphosphate. Its function is as follows. Involved in the biosynthesis of isoprenoids. Catalyzes the 1,3-allylic rearrangement of the homoallylic substrate isopentenyl (IPP) to its allylic isomer, dimethylallyl diphosphate (DMAPP). The sequence is that of Isopentenyl-diphosphate delta-isomerase from Bacillus cereus (strain AH820).